We begin with the raw amino-acid sequence, 312 residues long: tRNA dimethylallyltransferase (312 aa).

Gly-15–Ser-22 is an ATP binding site. Thr-17–Ser-22 lines the substrate pocket. The tract at residues Asp-40–Gln-43 is interaction with substrate tRNA.

Belongs to the IPP transferase family. Monomer. It depends on Mg(2+) as a cofactor.

It catalyses the reaction adenosine(37) in tRNA + dimethylallyl diphosphate = N(6)-dimethylallyladenosine(37) in tRNA + diphosphate. In terms of biological role, catalyzes the transfer of a dimethylallyl group onto the adenine at position 37 in tRNAs that read codons beginning with uridine, leading to the formation of N6-(dimethylallyl)adenosine (i(6)A). The chain is tRNA dimethylallyltransferase from Streptomyces griseus subsp. griseus (strain JCM 4626 / CBS 651.72 / NBRC 13350 / KCC S-0626 / ISP 5235).